A 461-amino-acid chain; its full sequence is V-type ATP synthase beta chain (461 aa).

This sequence belongs to the ATPase alpha/beta chains family.

In terms of biological role, produces ATP from ADP in the presence of a proton gradient across the membrane. The V-type beta chain is a regulatory subunit. The chain is V-type ATP synthase beta chain from Clostridium botulinum (strain 657 / Type Ba4).